The chain runs to 274 residues: Undecaprenyl-diphosphatase (274 aa).

7 helical membrane-spanning segments follow: residues 4–24 (ILLLKALILGIVEGLTEFLPI), 46–63 (LFEIVIQSGAILAVVWEY), 82–102 (KFILNLFVAFLPLAILGLAFG), 109–129 (LFNPVTVASTFILGAFVILWA), 184–204 (ATEFSFFLAIPTLIVATFYQL), 218–238 (MWAVGFVAAFVSAFLCVRWLL), and 249–269 (FAWYRIAFGIVVLATWQFGWV).

It belongs to the UppP family.

Its subcellular location is the cell inner membrane. It carries out the reaction di-trans,octa-cis-undecaprenyl diphosphate + H2O = di-trans,octa-cis-undecaprenyl phosphate + phosphate + H(+). Catalyzes the dephosphorylation of undecaprenyl diphosphate (UPP). Confers resistance to bacitracin. This is Undecaprenyl-diphosphatase from Dechloromonas aromatica (strain RCB).